The following is a 282-amino-acid chain: Pantothenate synthetase (282 aa).

Residue 30 to 37 (MGYLHEGH) coordinates ATP. The active-site Proton donor is the histidine 37. A (R)-pantoate-binding site is contributed by glutamine 61. Residue glutamine 61 coordinates beta-alanine. 147–150 (GQKD) is an ATP binding site. Glutamine 153 is a binding site for (R)-pantoate. Residues valine 176 and 184 to 187 (LSSR) each bind ATP.

This sequence belongs to the pantothenate synthetase family. Homodimer.

It is found in the cytoplasm. The enzyme catalyses (R)-pantoate + beta-alanine + ATP = (R)-pantothenate + AMP + diphosphate + H(+). It functions in the pathway cofactor biosynthesis; (R)-pantothenate biosynthesis; (R)-pantothenate from (R)-pantoate and beta-alanine: step 1/1. In terms of biological role, catalyzes the condensation of pantoate with beta-alanine in an ATP-dependent reaction via a pantoyl-adenylate intermediate. The sequence is that of Pantothenate synthetase from Desulfitobacterium hafniense (strain DSM 10664 / DCB-2).